Reading from the N-terminus, the 282-residue chain is Endo-1,4-beta-xylanase B (282 aa).

The signal sequence occupies residues 1–39 (MGISSILLSALIAGGALALPAAEPVSFDIRDENITLARR). Residue Asn33 is glycosylated (N-linked (GlcNAc...) asparagine). The region spanning 40–219 (AEAINYNQDY…GSGSGQISLS (180 aa)) is the GH11 domain. Glu117 functions as the Nucleophile in the catalytic mechanism. Glu206 (proton donor) is an active-site residue. A disordered region spans residues 214–245 (GQISLSKGTGGGSTTTTPTGPTSTSTAPSSGG). A compositionally biased stretch (low complexity) spans 227 to 243 (TTTTPTGPTSTSTAPSS). Residues 246–282 (TGAAQWGQCGGIGWTGPTTCVAPYTCKYENAYYSQCQ) enclose the CBM1 domain.

Belongs to the glycosyl hydrolase 11 (cellulase G) family.

It is found in the secreted. It carries out the reaction Endohydrolysis of (1-&gt;4)-beta-D-xylosidic linkages in xylans.. It functions in the pathway glycan degradation; xylan degradation. With respect to regulation, significantly inhibited by the wheat xylanase inhibiting protein I (XIP-I) and the proteinaceous endoxylanase Triticum aestivum xylanase inhibitors I (TAXI-I), but not TAXI-II. Endo-1,4-beta-xylanase involved in the hydrolysis of xylan, a major structural heterogeneous polysaccharide found in plant biomass representing the second most abundant polysaccharide in the biosphere, after cellulose. In Talaromyces funiculosus (Fruitlet core rot fungus), this protein is Endo-1,4-beta-xylanase B (xynB).